A 1046-amino-acid polypeptide reads, in one-letter code: Hemoglobin-haptoglobin-binding protein A (1046 aa).

The signal sequence occupies residues 1–24 (MTNFRLNLLAYSVMLGLTAGVAYA). A run of 4 repeats spans residues 26 to 29 (QPTN), 30 to 33 (QPTN), 34 to 37 (QPTN), and 38 to 41 (QPTN). Residues 26–41 (QPTNQPTNQPTNQPTN) form a 4 X 4 AA tandem repeats of Q-P-T-N region. Positions 51-58 (EQINVLGS) match the TonB box motif. The TBDR plug domain maps to 61-188 (HNDNTPPKIA…LGGSVSFDTK (128 aa)). The TBDR beta-barrel domain maps to 196–1046 (NKNYYASYKR…NYRMSVQFEF (851 aa)). The short motif at 1029–1046 (NRFYAPGRNYRMSVQFEF) is the TonB C-terminal box element.

Belongs to the TonB-dependent receptor family. Hemoglobin/haptoglobin binding protein subfamily.

The protein resides in the cell outer membrane. Its function is as follows. Acts as a receptor for the hemoglobin/haptoglobin complex of the human host and is required for heme uptake. Does not bind hemoglobin alone. The sequence is that of Hemoglobin-haptoglobin-binding protein A (hhuA) from Haemophilus influenzae.